Reading from the N-terminus, the 77-residue chain is Translation initiation factor IF-1, chloroplastic (77 aa).

Positions 1–71 (MKEQKWVHEG…TRGRIIYRLR (71 aa)) constitute an S1-like domain.

Belongs to the IF-1 family. As to quaternary structure, component of the 30S ribosomal translation pre-initiation complex which assembles on the 30S ribosome in the order IF-2 and IF-3, IF-1 and N-formylmethionyl-tRNA(fMet); mRNA recruitment can occur at any time during PIC assembly.

The protein localises to the plastid. It is found in the chloroplast. In terms of biological role, one of the essential components for the initiation of protein synthesis. Stabilizes the binding of IF-2 and IF-3 on the 30S subunit to which N-formylmethionyl-tRNA(fMet) subsequently binds. Helps modulate mRNA selection, yielding the 30S pre-initiation complex (PIC). Upon addition of the 50S ribosomal subunit IF-1, IF-2 and IF-3 are released leaving the mature 70S translation initiation complex. This is Translation initiation factor IF-1, chloroplastic from Cercidiphyllum japonicum (Katsura tree).